The chain runs to 156 residues: Ribosomal RNA large subunit methyltransferase H (156 aa).

S-adenosyl-L-methionine contacts are provided by residues leucine 72, glycine 104, and 123-128 (LGPMTF).

It belongs to the RNA methyltransferase RlmH family. In terms of assembly, homodimer.

Its subcellular location is the cytoplasm. The enzyme catalyses pseudouridine(1915) in 23S rRNA + S-adenosyl-L-methionine = N(3)-methylpseudouridine(1915) in 23S rRNA + S-adenosyl-L-homocysteine + H(+). Specifically methylates the pseudouridine at position 1915 (m3Psi1915) in 23S rRNA. This is Ribosomal RNA large subunit methyltransferase H from Nitratidesulfovibrio vulgaris (strain ATCC 29579 / DSM 644 / CCUG 34227 / NCIMB 8303 / VKM B-1760 / Hildenborough) (Desulfovibrio vulgaris).